We begin with the raw amino-acid sequence, 505 residues long: ATP synthase subunit alpha (505 aa).

170-177 lines the ATP pocket; it reads GDRQTGKT.

The protein belongs to the ATPase alpha/beta chains family. As to quaternary structure, F-type ATPases have 2 components, CF(1) - the catalytic core - and CF(0) - the membrane proton channel. CF(1) has five subunits: alpha(3), beta(3), gamma(1), delta(1), epsilon(1). CF(0) has four main subunits: a(1), b(1), b'(1) and c(9-12).

Its subcellular location is the cellular thylakoid membrane. It catalyses the reaction ATP + H2O + 4 H(+)(in) = ADP + phosphate + 5 H(+)(out). Its function is as follows. Produces ATP from ADP in the presence of a proton gradient across the membrane. The alpha chain is a regulatory subunit. The chain is ATP synthase subunit alpha from Synechococcus elongatus (strain ATCC 33912 / PCC 7942 / FACHB-805) (Anacystis nidulans R2).